Here is a 450-residue protein sequence, read N- to C-terminus: Histidinol dehydrogenase (450 aa).

Residues Y135, Q197, and N225 each coordinate NAD(+). T248, Q270, and H273 together coordinate substrate. 2 residues coordinate Zn(2+): Q270 and H273. Residues E339 and H340 each act as proton acceptor in the active site. Residues H340, D373, E427, and H432 each contribute to the substrate site. A Zn(2+)-binding site is contributed by D373. Position 432 (H432) interacts with Zn(2+).

It belongs to the histidinol dehydrogenase family. It depends on Zn(2+) as a cofactor.

It catalyses the reaction L-histidinol + 2 NAD(+) + H2O = L-histidine + 2 NADH + 3 H(+). The protein operates within amino-acid biosynthesis; L-histidine biosynthesis; L-histidine from 5-phospho-alpha-D-ribose 1-diphosphate: step 9/9. Functionally, catalyzes the sequential NAD-dependent oxidations of L-histidinol to L-histidinaldehyde and then to L-histidine. This chain is Histidinol dehydrogenase, found in Corynebacterium jeikeium (strain K411).